An 86-amino-acid chain; its full sequence is Protein Vpu (86 aa).

At 1–12 (MLELIGRIDYRL) the chain is on the extracellular side. A helical transmembrane segment spans residues 13–33 (GVGALIVALIIVIIVWTIAYI). Over 34 to 86 (EYRKLVRQRRIDWLVKRIKERAEDSGNESGGDTEELETMVDMGHLRLLDGNDL) the chain is Cytoplasmic. 2 positions are modified to phosphoserine; by host CK2: Ser-58 and Ser-62.

It belongs to the HIV-1 VPU protein family. As to quaternary structure, homopentamer. Interacts with host CD4 and BRTC; these interactions induce proteasomal degradation of CD4. Interacts with host BST2; this interaction leads to the degradation of host BST2. Interacts with host FBXW11. Interacts with host AP1M1; this interaction plays a role in the mistrafficking and subsequent degradation of host BST2. Interacts with host RANBP2; this interaction allows Vpu to down-regulate host BLM sumoylation. In terms of processing, phosphorylated by host CK2. This phosphorylation is necessary for interaction with human BTRC and degradation of CD4.

It is found in the host membrane. Ion channel activity is inhibited by hexamethylene amiloride in vitro. Enhances virion budding, by targeting human CD4 and Tetherin/BST2 to proteasome degradation. Degradation of CD4 prevents any unwanted premature interactions between viral Env and its host receptor CD4 in the endoplasmic reticulum. Degradation of antiretroviral protein Tetherin/BST2 is important for virion budding, as BST2 tethers new viral particles to the host cell membrane. Mechanistically, Vpu bridges either CD4 or BST2 to BTRC, a substrate recognition subunit of the Skp1/Cullin/F-box protein E3 ubiquitin ligase, induces their ubiquitination and subsequent proteasomal degradation. The alteration of the E3 ligase specificity by Vpu seems to promote the degradation of host IKBKB, leading to NF-kappa-B down-regulation and subsequent apoptosis. Acts as a viroporin that forms an oligomeric ion channel in membranes. Modulates the host DNA repair mechanisms to promote degradation of nuclear viral cDNA in cells that are already productively infected in order to suppress immune sensing and proviral hyper-integration (superinfection). Manipulates PML-NBs and modulates SUMOylation of host BLM protein thereby enhancing its DNA-end processing activity toward viral unintegrated linear DNA. Also inhibits RAD52-mediated homologous repair of viral cDNA, preventing the generation of dead-end circular forms of single copies of the long terminal repeat and permitting sustained nucleolytic attack. This is Protein Vpu from Homo sapiens (Human).